The sequence spans 128 residues: Large ribosomal subunit protein uL22 (128 aa).

It belongs to the universal ribosomal protein uL22 family. In terms of assembly, part of the 50S ribosomal subunit.

Functionally, this protein binds specifically to 23S rRNA; its binding is stimulated by other ribosomal proteins, e.g. L4, L17, and L20. It is important during the early stages of 50S assembly. It makes multiple contacts with different domains of the 23S rRNA in the assembled 50S subunit and ribosome. In terms of biological role, the globular domain of the protein is located near the polypeptide exit tunnel on the outside of the subunit, while an extended beta-hairpin is found that lines the wall of the exit tunnel in the center of the 70S ribosome. This is Large ribosomal subunit protein uL22 from Methylobacterium radiotolerans (strain ATCC 27329 / DSM 1819 / JCM 2831 / NBRC 15690 / NCIMB 10815 / 0-1).